Here is a 719-residue protein sequence, read N- to C-terminus: Fatty acid oxidation complex subunit alpha (719 aa).

Positions M1–A190 are enoyl-CoA hydratase/isomerase. Residue D298 coordinates substrate. The tract at residues H313–A719 is 3-hydroxyacyl-CoA dehydrogenase. NAD(+)-binding positions include M326, D345, V402–E404, K409, and S431. H452 functions as the For 3-hydroxyacyl-CoA dehydrogenase activity in the catalytic mechanism. Position 455 (N455) interacts with NAD(+). N502 contacts substrate.

The protein in the N-terminal section; belongs to the enoyl-CoA hydratase/isomerase family. In the C-terminal section; belongs to the 3-hydroxyacyl-CoA dehydrogenase family. Heterotetramer of two alpha chains (FadB) and two beta chains (FadA).

The enzyme catalyses a (3S)-3-hydroxyacyl-CoA + NAD(+) = a 3-oxoacyl-CoA + NADH + H(+). It carries out the reaction a (3S)-3-hydroxyacyl-CoA = a (2E)-enoyl-CoA + H2O. The catalysed reaction is a 4-saturated-(3S)-3-hydroxyacyl-CoA = a (3E)-enoyl-CoA + H2O. It catalyses the reaction (3S)-3-hydroxybutanoyl-CoA = (3R)-3-hydroxybutanoyl-CoA. The enzyme catalyses a (3Z)-enoyl-CoA = a 4-saturated (2E)-enoyl-CoA. It carries out the reaction a (3E)-enoyl-CoA = a 4-saturated (2E)-enoyl-CoA. Its pathway is lipid metabolism; fatty acid beta-oxidation. Functionally, involved in the aerobic and anaerobic degradation of long-chain fatty acids via beta-oxidation cycle. Catalyzes the formation of 3-oxoacyl-CoA from enoyl-CoA via L-3-hydroxyacyl-CoA. It can also use D-3-hydroxyacyl-CoA and cis-3-enoyl-CoA as substrate. This chain is Fatty acid oxidation complex subunit alpha, found in Psychrobacter arcticus (strain DSM 17307 / VKM B-2377 / 273-4).